A 400-amino-acid chain; its full sequence is Formate-dependent phosphoribosylglycinamide formyltransferase (400 aa).

N(1)-(5-phospho-beta-D-ribosyl)glycinamide is bound by residues 22-23 (EL) and glutamate 82. ATP contacts are provided by residues arginine 115, lysine 157, 162–167 (SSGKGQ), 197–200 (EGFI), and glutamate 205. The ATP-grasp domain maps to 120–315 (RLAAETLGVP…EFELHARAIL (196 aa)). 2 residues coordinate Mg(2+): glutamate 274 and glutamate 286. Residues aspartate 293, lysine 362, and 369–370 (RR) each bind N(1)-(5-phospho-beta-D-ribosyl)glycinamide.

It belongs to the PurK/PurT family. In terms of assembly, homodimer.

It carries out the reaction N(1)-(5-phospho-beta-D-ribosyl)glycinamide + formate + ATP = N(2)-formyl-N(1)-(5-phospho-beta-D-ribosyl)glycinamide + ADP + phosphate + H(+). It functions in the pathway purine metabolism; IMP biosynthesis via de novo pathway; N(2)-formyl-N(1)-(5-phospho-D-ribosyl)glycinamide from N(1)-(5-phospho-D-ribosyl)glycinamide (formate route): step 1/1. Involved in the de novo purine biosynthesis. Catalyzes the transfer of formate to 5-phospho-ribosyl-glycinamide (GAR), producing 5-phospho-ribosyl-N-formylglycinamide (FGAR). Formate is provided by PurU via hydrolysis of 10-formyl-tetrahydrofolate. The polypeptide is Formate-dependent phosphoribosylglycinamide formyltransferase (Variovorax paradoxus (strain S110)).